We begin with the raw amino-acid sequence, 302 residues long: Sulfate adenylyltransferase subunit 2 (302 aa).

It belongs to the PAPS reductase family. CysD subfamily. As to quaternary structure, heterodimer composed of CysD, the smaller subunit, and CysN.

It catalyses the reaction sulfate + ATP + H(+) = adenosine 5'-phosphosulfate + diphosphate. Its pathway is sulfur metabolism; hydrogen sulfide biosynthesis; sulfite from sulfate: step 1/3. In terms of biological role, with CysN forms the ATP sulfurylase (ATPS) that catalyzes the adenylation of sulfate producing adenosine 5'-phosphosulfate (APS) and diphosphate, the first enzymatic step in sulfur assimilation pathway. APS synthesis involves the formation of a high-energy phosphoric-sulfuric acid anhydride bond driven by GTP hydrolysis by CysN coupled to ATP hydrolysis by CysD. The polypeptide is Sulfate adenylyltransferase subunit 2 (Salmonella schwarzengrund (strain CVM19633)).